Here is a 202-residue protein sequence, read N- to C-terminus: N-(5'-phosphoribosyl)anthranilate isomerase (202 aa).

Belongs to the TrpF family.

The enzyme catalyses N-(5-phospho-beta-D-ribosyl)anthranilate = 1-(2-carboxyphenylamino)-1-deoxy-D-ribulose 5-phosphate. It functions in the pathway amino-acid biosynthesis; L-tryptophan biosynthesis; L-tryptophan from chorismate: step 3/5. The polypeptide is N-(5'-phosphoribosyl)anthranilate isomerase (Bacillus cereus (strain ATCC 14579 / DSM 31 / CCUG 7414 / JCM 2152 / NBRC 15305 / NCIMB 9373 / NCTC 2599 / NRRL B-3711)).